Reading from the N-terminus, the 406-residue chain is Olfactomedin-like protein 3 (406 aa).

The signal sequence occupies residues Met-1–Gly-21. Residues His-25–Asn-101 are a coiled coil. The Olfactomedin-like domain maps to Asp-134–Lys-401. A disulfide bridge connects residues Cys-135 and Cys-328. 2 N-linked (GlcNAc...) asparagine glycosylation sites follow: Asn-177 and Asn-248.

It belongs to the OLFML3 family. As to expression, abundant in placenta, moderate in liver and heart, whereas fairly weak in other tissues examined. On term placenta, mainly localized extracellularly surrounding the syncytiotrophoblastic cells and very rarely expressed in the maternal decidua layer.

Its subcellular location is the secreted. Functionally, secreted scaffold protein that plays an essential role in dorsoventral patterning during early development. Stabilizes axial formation by restricting chordin (CHRD) activity on the dorsal side. Acts by facilitating the association between the tolloid proteases and their substrate chordin (CHRD), leading to enhance chordin (CHRD) degradation. May have matrix-related function involved in placental and embryonic development, or play a similar role in other physiological processes. This chain is Olfactomedin-like protein 3 (OLFML3), found in Homo sapiens (Human).